The following is a 301-amino-acid chain: MEPLMGMGVLALMGAAATIAGTTEDLESDVGSQSNPNSQVQLAPQMMYPHRIYNKAISGEPPSNALICAIGGTVASVLMTANLSVIFAIAIGALVASAVHGTYCITAYMGRTASQKRFRQPIYLDILRSHTPVMMGYAFITTFCILVVSYIMVAVLAHPFPLTLLAFIWGITVGAIGSSTGDVHYGAEREFQNVEFGSGLNAANSGNIVRKAESGLRNGIDNSWFCAKFGGPVTGLAFGMTVFLSGWVTAVFNPAISLTMGWLSVAAGVILVLLLIIWNRKIEVAARKAFGPYKEEEEVAA.

Helical transmembrane passes span 85–105 (VIFAIAIGALVASAVHGTYCI), 130–150 (HTPVMMGYAFITTFCILVVSY), 151–171 (IMVAVLAHPFPLTLLAFIWGI), 232–252 (PVTGLAFGMTVFLSGWVTAVF), and 258–278 (LTMGWLSVAAGVILVLLLIIW).

The protein belongs to the MtrE family. The complex is composed of 8 subunits; MtrA, MtrB, MtrC, MtrD, MtrE, MtrF, MtrG and MtrH.

Its subcellular location is the cell membrane. It catalyses the reaction 5-methyl-5,6,7,8-tetrahydromethanopterin + coenzyme M + 2 Na(+)(in) = 5,6,7,8-tetrahydromethanopterin + methyl-coenzyme M + 2 Na(+)(out). In terms of biological role, part of a complex that catalyzes the formation of methyl-coenzyme M and tetrahydromethanopterin from coenzyme M and methyl-tetrahydromethanopterin. This is an energy-conserving, sodium-ion translocating step. The chain is Tetrahydromethanopterin S-methyltransferase subunit E from Methanococcoides burtonii (strain DSM 6242 / NBRC 107633 / OCM 468 / ACE-M).